A 160-amino-acid polypeptide reads, in one-letter code: Cytochrome b6-f complex subunit 4 (160 aa).

3 consecutive transmembrane segments (helical) span residues 36–56 (LLYM…SLAV), 95–115 (LIGI…PFIE), and 131–151 (AVFL…TLPI).

This sequence belongs to the cytochrome b family. PetD subfamily. The 4 large subunits of the cytochrome b6-f complex are cytochrome b6, subunit IV (17 kDa polypeptide, petD), cytochrome f and the Rieske protein, while the 4 small subunits are petG, petL, petM and petN. The complex functions as a dimer.

It is found in the plastid. Its subcellular location is the chloroplast thylakoid membrane. Its function is as follows. Component of the cytochrome b6-f complex, which mediates electron transfer between photosystem II (PSII) and photosystem I (PSI), cyclic electron flow around PSI, and state transitions. This chain is Cytochrome b6-f complex subunit 4, found in Bigelowiella natans (Pedinomonas minutissima).